The sequence spans 236 residues: Three prime repair exonuclease 2 (236 aa).

Positions 14 and 16 each coordinate Mg(2+). Substrate contacts are provided by residues 16–17 (EA) and tyrosine 122. The active-site Proton donor/acceptor is histidine 188. Aspartate 193 is a Mg(2+) binding site. Aspartate 193 provides a ligand contact to substrate.

The protein belongs to the exonuclease superfamily. TREX family. In terms of assembly, homodimer. Mg(2+) is required as a cofactor.

The protein localises to the nucleus. It catalyses the reaction Exonucleolytic cleavage in the 3'- to 5'-direction to yield nucleoside 5'-phosphates.. Functionally, exonuclease with a preference for double-stranded DNA with mismatched 3' termini. May play a role in DNA repair. This Mus musculus (Mouse) protein is Three prime repair exonuclease 2 (Trex2).